Reading from the N-terminus, the 289-residue chain is Dermonecrotic toxin LarSicTox-betaID1 (289 aa).

The signal sequence occupies residues 1–2; sequence EG. A propeptide spanning residues 3–11 is cleaved from the precursor; the sequence is AEQDGSERT. Residue His-22 is part of the active site. Residues Glu-42 and Asp-44 each coordinate Mg(2+). The active-site Nucleophile is the His-58. Intrachain disulfides connect Cys-62–Cys-68 and Cys-64–Cys-207. Residue Asp-102 participates in Mg(2+) binding.

This sequence belongs to the arthropod phospholipase D family. Class II subfamily. Mg(2+) serves as cofactor. Expressed by the venom gland.

It is found in the secreted. It catalyses the reaction an N-(acyl)-sphingosylphosphocholine = an N-(acyl)-sphingosyl-1,3-cyclic phosphate + choline. The enzyme catalyses N-hexanoyl-sphing-4-enine-1-phosphocholine = N-(hexanoyl)-sphing-4-enine-1,3-cyclic phosphate + choline. The catalysed reaction is N-(dodecanoyl)-sphing-4-enine-1-phosphocholine = N-dodecanoyl-sphing-4-enine-1,3-cyclic phosphate + choline. It carries out the reaction an N-(acyl)-sphingosylphosphoethanolamine = an N-(acyl)-sphingosyl-1,3-cyclic phosphate + ethanolamine. It catalyses the reaction N-dodecanoyl-heptadecasphing-4-enine-1-phosphoethanolamine = N-dodecanoyl-heptadecasphing-4-enine-1,3-cyclic phosphate + ethanolamine. The enzyme catalyses a 1-acyl-sn-glycero-3-phosphocholine = a 1-acyl-sn-glycero-2,3-cyclic phosphate + choline. The catalysed reaction is 1-tetradecanoyl-sn-glycero-3-phosphocholine = 1-tetradecanoyl-sn-glycero-2,3-cyclic phosphate + choline. It carries out the reaction 1-octanoyl-sn-glycero-3-phosphocholine = 1-octanoyl-sn-glycero-2,3-cyclic phosphate + choline. It catalyses the reaction a 1-acyl-sn-glycero-3-phosphoethanolamine = a 1-acyl-sn-glycero-2,3-cyclic phosphate + ethanolamine. The enzyme catalyses 1-tetradecanoyl-sn-glycero-3-phosphoethanolamine = 1-tetradecanoyl-sn-glycero-2,3-cyclic phosphate + ethanolamine. Dermonecrotic toxins cleave the phosphodiester linkage between the phosphate and headgroup of certain phospholipids (sphingolipid and lysolipid substrates), forming an alcohol (often choline) and a cyclic phosphate. This toxin acts on sphingomyelin (SM) and on ceramide phosphoethanolamine (CPE) with high activity. It also acts on lysophosphatidylcholine (LPC) and on lysophosphatidylethanolamine (LPE) with moderate activity. It is not active on lysophosphatidylserine (LPS), and lysophosphatidylglycerol (LPG). It acts by transphosphatidylation, releasing exclusively cyclic phosphate as second products. It is not surprising that spider toxins have affinity for ethanolamine-containing sphingolipids since they are common in insect prey. On mammals, induces dermonecrosis, hemolysis, increased vascular permeability, edema, inflammatory response, and platelet aggregation. The chain is Dermonecrotic toxin LarSicTox-betaID1 from Loxosceles arizonica (Arizona brown spider).